The sequence spans 234 residues: Demethylmenaquinone methyltransferase (234 aa).

S-adenosyl-L-methionine is bound by residues Thr62, Asp80, 100 to 101, and Ser117; that span reads DA.

This sequence belongs to the class I-like SAM-binding methyltransferase superfamily. MenG/UbiE family.

It carries out the reaction a 2-demethylmenaquinol + S-adenosyl-L-methionine = a menaquinol + S-adenosyl-L-homocysteine + H(+). It functions in the pathway quinol/quinone metabolism; menaquinone biosynthesis; menaquinol from 1,4-dihydroxy-2-naphthoate: step 2/2. Functionally, methyltransferase required for the conversion of demethylmenaquinol (DMKH2) to menaquinol (MKH2). This Mycobacterium bovis (strain ATCC BAA-935 / AF2122/97) protein is Demethylmenaquinone methyltransferase.